The following is a 173-amino-acid chain: Flavodoxin 2 (173 aa).

The 163-residue stretch at 3–165 (MGLFYGSSTC…RIQSWCEQIL (163 aa)) folds into the Flavodoxin-like domain.

This sequence belongs to the flavodoxin family. It depends on FMN as a cofactor.

Its function is as follows. Low-potential electron donor to a number of redox enzymes. This Escherichia coli O157:H7 protein is Flavodoxin 2 (fldB).